The chain runs to 361 residues: Chorismate synthase (361 aa).

Arginine 47 lines the NADP(+) pocket. FMN contacts are provided by residues 124-126 (RAS), glycine 286, 301-305 (KPTAT), and arginine 327.

The protein belongs to the chorismate synthase family. Homotetramer. It depends on FMNH2 as a cofactor.

It catalyses the reaction 5-O-(1-carboxyvinyl)-3-phosphoshikimate = chorismate + phosphate. The protein operates within metabolic intermediate biosynthesis; chorismate biosynthesis; chorismate from D-erythrose 4-phosphate and phosphoenolpyruvate: step 7/7. Functionally, catalyzes the anti-1,4-elimination of the C-3 phosphate and the C-6 proR hydrogen from 5-enolpyruvylshikimate-3-phosphate (EPSP) to yield chorismate, which is the branch point compound that serves as the starting substrate for the three terminal pathways of aromatic amino acid biosynthesis. This reaction introduces a second double bond into the aromatic ring system. The protein is Chorismate synthase of Prochlorococcus marinus (strain NATL1A).